Consider the following 436-residue polypeptide: uncharacterized protein (436 aa).

This is an uncharacterized protein from Haemophilus influenzae (strain ATCC 51907 / DSM 11121 / KW20 / Rd).